Here is a 283-residue protein sequence, read N- to C-terminus: Putative cuticle collagen 79 (283 aa).

Positions 59–283 are disordered; sequence FKQQSSPPSP…ARSISKVAIQ (225 aa). 3 triple-helical region regions span residues 94-122, 139-201, and 204-269; these read GPPG…ENGG, GPRG…PGRK, and GEAG…DGAY. Residues 137-146 show a composition bias toward pro residues; sequence PPGPRGPPGP. Positions 226–240 are enriched in acidic residues; the sequence is TDGDDGVDGQPGDEG. Over residues 253–265 the composition is skewed to low complexity; the sequence is PQGEQGTEGQPGT.

The protein belongs to the cuticular collagen family. In terms of assembly, collagen polypeptide chains are complexed within the cuticle by disulfide bonds and other types of covalent cross-links.

Its function is as follows. Nematode cuticles are composed largely of collagen-like proteins. The cuticle functions both as an exoskeleton and as a barrier to protect the worm from its environment. This chain is Putative cuticle collagen 79 (col-79), found in Caenorhabditis elegans.